Here is a 207-residue protein sequence, read N- to C-terminus: N-(5'-phosphoribosyl)anthranilate isomerase (207 aa).

The protein belongs to the TrpF family.

The enzyme catalyses N-(5-phospho-beta-D-ribosyl)anthranilate = 1-(2-carboxyphenylamino)-1-deoxy-D-ribulose 5-phosphate. Its pathway is amino-acid biosynthesis; L-tryptophan biosynthesis; L-tryptophan from chorismate: step 3/5. This is N-(5'-phosphoribosyl)anthranilate isomerase from Stutzerimonas stutzeri (strain A1501) (Pseudomonas stutzeri).